The chain runs to 378 residues: Bifunctional enzyme IspD/IspF (378 aa).

Residues 1-222 (MTETVAIIVA…RLLSPTGAPR (222 aa)) are 2-C-methyl-D-erythritol 4-phosphate cytidylyltransferase. The segment at 222–378 (RIGKGYDVHE…EAVALLMPKG (157 aa)) is 2-C-methyl-D-erythritol 2,4-cyclodiphosphate synthase. A divalent metal cation is bound by residues Asp-228 and His-230. 4-CDP-2-C-methyl-D-erythritol 2-phosphate contacts are provided by residues 228-230 (DVH) and 254-255 (HS). His-262 serves as a coordination point for a divalent metal cation. 4-CDP-2-C-methyl-D-erythritol 2-phosphate is bound by residues 276 to 278 (DIG), 352 to 355 (TTTE), Phe-359, and Arg-362.

It in the N-terminal section; belongs to the IspD/TarI cytidylyltransferase family. IspD subfamily. The protein in the C-terminal section; belongs to the IspF family. It depends on a divalent metal cation as a cofactor.

It carries out the reaction 2-C-methyl-D-erythritol 4-phosphate + CTP + H(+) = 4-CDP-2-C-methyl-D-erythritol + diphosphate. The catalysed reaction is 4-CDP-2-C-methyl-D-erythritol 2-phosphate = 2-C-methyl-D-erythritol 2,4-cyclic diphosphate + CMP. It participates in isoprenoid biosynthesis; isopentenyl diphosphate biosynthesis via DXP pathway; isopentenyl diphosphate from 1-deoxy-D-xylulose 5-phosphate: step 2/6. Its pathway is isoprenoid biosynthesis; isopentenyl diphosphate biosynthesis via DXP pathway; isopentenyl diphosphate from 1-deoxy-D-xylulose 5-phosphate: step 4/6. Functionally, bifunctional enzyme that catalyzes the formation of 4-diphosphocytidyl-2-C-methyl-D-erythritol from CTP and 2-C-methyl-D-erythritol 4-phosphate (MEP) (IspD), and catalyzes the conversion of 4-diphosphocytidyl-2-C-methyl-D-erythritol 2-phosphate (CDP-ME2P) to 2-C-methyl-D-erythritol 2,4-cyclodiphosphate (ME-CPP) with a corresponding release of cytidine 5-monophosphate (CMP) (IspF). This chain is Bifunctional enzyme IspD/IspF, found in Hyphomonas neptunium (strain ATCC 15444).